Consider the following 86-residue polypeptide: MTILASISSIGNIKSSSKSNIASSSSSSSSQSLNSIQCCSCSLALGNTVGNLVGGVLFGTGVIVGSVLNTVGNITTPILHPDCGCN.

A disordered region spans residues 11-33 (GNIKSSSKSNIASSSSSSSSQSL).

It belongs to the hssA/B family.

The chain is HssA/B-like protein 60 (hssl60) from Dictyostelium discoideum (Social amoeba).